The following is an 89-amino-acid chain: MPLSKEQKQEVMEKYKLHEHDTGSPEVQIAILTEKIKQLNEHLKTHQQDHASRRGLLKMVGKRRGLLNYLKSNSADRYLELIKKLGLRK.

The disordered stretch occupies residues 1-22 (MPLSKEQKQEVMEKYKLHEHDT).

The protein belongs to the universal ribosomal protein uS15 family. Part of the 30S ribosomal subunit. Forms a bridge to the 50S subunit in the 70S ribosome, contacting the 23S rRNA.

Functionally, one of the primary rRNA binding proteins, it binds directly to 16S rRNA where it helps nucleate assembly of the platform of the 30S subunit by binding and bridging several RNA helices of the 16S rRNA. Forms an intersubunit bridge (bridge B4) with the 23S rRNA of the 50S subunit in the ribosome. This chain is Small ribosomal subunit protein uS15, found in Natranaerobius thermophilus (strain ATCC BAA-1301 / DSM 18059 / JW/NM-WN-LF).